The primary structure comprises 217 residues: MTTPYPRSDERRRMVDLQIAGRGIRDPRVLAAMAEVPRHLFIPPPYDRDAYADTPLPIGNDQTISQPYIVALMTELLHPCPEDRVLEIGAGSGYQAAILARLAAKVVTIERLGAVAAQARANLAAVGAENVEVIEGDGTFGYPLSAPYDGILVTAASPEIPQPLTEQLADKGRLVVPVGGRAMQDIVVLERDGSRYREERIEGVRFVPLIGKYGWEN.

The active site involves S65.

The protein belongs to the methyltransferase superfamily. L-isoaspartyl/D-aspartyl protein methyltransferase family.

It is found in the cytoplasm. It catalyses the reaction [protein]-L-isoaspartate + S-adenosyl-L-methionine = [protein]-L-isoaspartate alpha-methyl ester + S-adenosyl-L-homocysteine. Catalyzes the methyl esterification of L-isoaspartyl residues in peptides and proteins that result from spontaneous decomposition of normal L-aspartyl and L-asparaginyl residues. It plays a role in the repair and/or degradation of damaged proteins. The chain is Protein-L-isoaspartate O-methyltransferase from Methanoregula boonei (strain DSM 21154 / JCM 14090 / 6A8).